The sequence spans 102 residues: Integration host factor subunit alpha (102 aa).

The segment at 49–71 is disordered; that stretch reads FGNFQLRTKPQRPGRNPKTGEEI.

It belongs to the bacterial histone-like protein family. Heterodimer of an alpha and a beta chain.

In terms of biological role, this protein is one of the two subunits of integration host factor, a specific DNA-binding protein that functions in genetic recombination as well as in transcriptional and translational control. In Nitrosomonas eutropha (strain DSM 101675 / C91 / Nm57), this protein is Integration host factor subunit alpha.